The sequence spans 1017 residues: Stereoselective keto-reductase af490 (1017 aa).

Positions 6 to 138 (NELSGSQVPG…GRLRMTFAGH (133 aa)) are N-terminal hotdog fold. The PKS/mFAS DH domain occupies 6-311 (NELSGSQVPG…MSPIAPSTEK (306 aa)). A dehydratase (DH) region spans residues 8–306 (LSGSQVPGAT…LEGLTMSPIA (299 aa)). Residues 153–311 (LRPVSISPFY…MSPIAPSTEK (159 aa)) are C-terminal hotdog fold. Residues 532-720 (QIRFLRAPFD…VQGGRLLIPR (189 aa)) form a ketoreductase (KR) region.

It catalyses the reaction fumagillol + NADP(+) = 5-dehydrofumagillol + NADPH + H(+). Its pathway is secondary metabolite biosynthesis; terpenoid biosynthesis. Its function is as follows. Stereoselective keto-reductase; part of the gene cluster that mediates the biosynthesis of fumagillin, a meroterpenoid that has numerous biological activities including irreversible inhibition of human type 2 methionine aminopeptidase (METAP2). Within the pathway, the keto-reductase af490 acts as a 5-dehydrofumagillol 5-reductase that stereoselectively reduces 5-keto-fumagillol to 5R-hydroxy-seco-sesquiterpene. The pathway begins with the conversion of farnesyl pyrophosphate (FPP) to beta-trans-bergamotene by the membrane-bound beta-trans-bergamotene synthase af520. The multifunctional cytochrome P450 monooxygenase af510 then converts beta-trans-bergamotene into 5-keto-demethoxyfumagillol via several oxydation steps. 5-keto-demethoxyfumagillol is then subjected to successive C-6 hydroxylation and O-methylation by the dioxygenase af480 and O-methyltransferase af390-400, respectively, to yield 5-keto-fumagillol, which is then stereoselectively reduced by the keto-reductase af490 to 5R-hydroxy-seco-sesquiterpene. The next step is the polyketide transferase af380-catalyzed transfer of a dodecapentaenoyl group synthesized by the polyketide synthase af370 onto 5R-hydroxy-seco-sesquiterpene which leads to the production of prefumagillin. Finally, oxidative cleavage by the monooxygenase af470 converts prefumagillin to fumagillin. The sequence is that of Stereoselective keto-reductase af490 from Aspergillus fumigatus (strain ATCC MYA-4609 / CBS 101355 / FGSC A1100 / Af293) (Neosartorya fumigata).